Consider the following 120-residue polypeptide: Sirohydrochlorin cobaltochelatase (120 aa).

H9 (proton acceptor) is an active-site residue. Residue H9 participates in Co(2+) binding. Substrate-binding positions include Q43 and 68–73 (FAAGTH). Residue H73 participates in Co(2+) binding.

The protein belongs to the CbiX family. CbiXS subfamily. As to quaternary structure, homotetramer; dimer of dimers.

The enzyme catalyses Co-sirohydrochlorin + 2 H(+) = sirohydrochlorin + Co(2+). It participates in cofactor biosynthesis; adenosylcobalamin biosynthesis; cob(II)yrinate a,c-diamide from sirohydrochlorin (anaerobic route): step 1/10. Its function is as follows. Catalyzes the insertion of Co(2+) into sirohydrochlorin as part of the anaerobic pathway to cobalamin biosynthesis. This chain is Sirohydrochlorin cobaltochelatase, found in Sulfurisphaera tokodaii (strain DSM 16993 / JCM 10545 / NBRC 100140 / 7) (Sulfolobus tokodaii).